Here is a 423-residue protein sequence, read N- to C-terminus: Steroid hormone receptor ERR1 (423 aa).

The segment at 1 to 67 is disordered; it reads MSSQVVGIEP…GAGPGEQGGG (67 aa). The tract at residues 1 to 76 is repressor domain; that stretch reads MSSQVVGIEP…GKLVLSSLPK (76 aa). Residue Lys-14 forms a Glycyl lysine isopeptide (Lys-Gly) (interchain with G-Cter in SUMO) linkage. Ser-19 and Ser-22 each carry phosphoserine. Gly residues predominate over residues 58 to 67; that stretch reads GAGPGEQGGG. The segment at residues 76 to 151 is a DNA-binding region (nuclear receptor); sequence KRLCLVCGDV…VGMLKEGVRL (76 aa). 2 NR C4-type zinc fingers span residues 79–99 and 115–134; these read CLVC…CEAC and CPAS…CQAC. Residues Lys-129, Lys-138, Lys-160, and Lys-162 each carry the N6-acetyllysine; by PCAF/KAT2B modification. A Glycyl lysine isopeptide (Lys-Gly) (interchain with G-Cter in SUMO2) cross-link involves residue Lys-189. An NR LBD domain is found at 193-421; the sequence is PVNALVSHLL…KLFLEMLEAM (229 aa). A Glycyl lysine isopeptide (Lys-Gly) (interchain with G-Cter in SUMO); alternate cross-link involves residue Lys-403. Lys-403 is covalently cross-linked (Glycyl lysine isopeptide (Lys-Gly) (interchain with G-Cter in SUMO2); alternate). The segment at 403 to 423 is AF-2 domain; the sequence is KLEGKVPMHKLFLEMLEAMMD.

This sequence belongs to the nuclear hormone receptor family. NR3 subfamily. In terms of assembly, binds DNA as a monomer or a homodimer. Interacts (via the AF2 domain) with coactivator PPARGC1A (via the L3 motif); the interaction greatly enhances transcriptional activity of genes involved in energy metabolism. Interacts with PIAS4; the interaction enhances sumoylation. Interacts with MAPK15; promotes re-localization of ESRRA to the cytoplasm through a XPO1-dependent mechanism then inhibits ESRRA transcriptional activity. In terms of processing, phosphorylation on Ser-19 enhances sumoylation on Lys-14 increasing repression of transcriptional activity. Sumoylated with SUMO2. Main site is Lys-14 which is enhanced by phosphorylation on Ser-19, cofactor activation, and by interaction with PIAS4. Sumoylation enhances repression of transcriptional activity, but has no effect on subcellular location nor on DNA binding. Post-translationally, reversibly acetylated. Acetylation by PCAF/KAT2 at Lys-129, Lys-138, Lys-160 and Lys-162 and PCAF/KAT2 decreases transcriptional activity probably by inhibiting DNA-binding activity; deacetylation involves SIRT1 and HDAC8 and increases DNA-binding.

The protein resides in the nucleus. It localises to the cytoplasm. Functionally, binds to an ERR-alpha response element (ERRE) containing a single consensus half-site, 5'-TNAAGGTCA-3'. Can bind to the medium-chain acyl coenzyme A dehydrogenase (MCAD) response element NRRE-1 and may act as an important regulator of MCAD promoter. Binds to the C1 region of the lactoferrin gene promoter. Requires dimerization and the coactivator, PGC-1A, for full activity. The ERRalpha/PGC1alpha complex is a regulator of energy metabolism. Induces the expression of PERM1 in the skeletal muscle. This Homo sapiens (Human) protein is Steroid hormone receptor ERR1 (ESRRA).